A 295-amino-acid polypeptide reads, in one-letter code: Forkhead box protein N5 (295 aa).

Residues 119-146 (STVEDSEDEAPTSCSDLMTDDDNDDSYN) form a disordered region. A DNA-binding region (fork-head) is located at residues 178 to 275 (RPPLNYCNLI…NEMHALSDDL (98 aa)).

Ubiquitously expressed in early cleavage stage and gastrula stage embryos.

Its subcellular location is the nucleus. This Xenopus laevis (African clawed frog) protein is Forkhead box protein N5.